Reading from the N-terminus, the 413-residue chain is MNATYYLSKPLERRRSVGVAVGDVMVGGQNPVVVQSMTNTDTADVDATVSQVAALWQAGSQLVRITVDRDEAAAAVPKIRERLERLGFSIPLVGDFHYIGHKLLSEHPACAEALAKYRINPGNVGFGAKKDRQFAEIIEIASRYHKPIRIGVNWGSLDNALLTQLMNENAQQENPLSVAEVMRETVVQSALLSAALAEELGLGRDKIILSAKVSDVQDLIAVYTTLAERCDYALHLGLTEAGMGTKGVVASSVALGILLQQGIGDTIRISLTPEPGGDRTREVKVGQELLQVMGFRQFLPVVAACPGCGRTTSTVFQQLAQKIEADLHKNMPVWREKYPGVESLKVAVMGCIVNGPGESKHADIGISLPGVGESPAAPVFIEGQKVKTLRGDHIAEEFEGILSDYIHKRFGQG.

[4Fe-4S] cluster-binding residues include Cys-305, Cys-308, Cys-351, and Glu-358.

Belongs to the IspG family. [4Fe-4S] cluster is required as a cofactor.

The catalysed reaction is (2E)-4-hydroxy-3-methylbut-2-enyl diphosphate + oxidized [flavodoxin] + H2O + 2 H(+) = 2-C-methyl-D-erythritol 2,4-cyclic diphosphate + reduced [flavodoxin]. The protein operates within isoprenoid biosynthesis; isopentenyl diphosphate biosynthesis via DXP pathway; isopentenyl diphosphate from 1-deoxy-D-xylulose 5-phosphate: step 5/6. In terms of biological role, converts 2C-methyl-D-erythritol 2,4-cyclodiphosphate (ME-2,4cPP) into 1-hydroxy-2-methyl-2-(E)-butenyl 4-diphosphate. In Bartonella tribocorum (strain CIP 105476 / IBS 506), this protein is 4-hydroxy-3-methylbut-2-en-1-yl diphosphate synthase (flavodoxin).